Reading from the N-terminus, the 301-residue chain is Nucleosome assembly protein 1;3 (301 aa).

Residues 15-69 adopt a coiled-coil conformation; sequence VETLKNKLQALAEQHVDVLESLAPVVRKRVDVLIEIQSQHDELEAKFLEEKAALE. The Nuclear export signal signature appears at 36–51; the sequence is LAPVVRKRVDVLIEIQ. Positions 278–301 are disordered; that stretch reads DEDYGASWVDDEEDDDDEYSDEEA.

The protein belongs to the nucleosome assembly protein (NAP) family.

It is found in the nucleus. The protein resides in the cytoplasm. In terms of biological role, may modulate chromatin structure by regulation of nucleosome assembly/disassembly. In Oryza sativa subsp. japonica (Rice), this protein is Nucleosome assembly protein 1;3 (NAP1;3).